The chain runs to 785 residues: 1-phosphatidylinositol 4,5-bisphosphate phosphodiesterase delta-3 (785 aa).

Residues 1-43 (MLCGGWKRSRRSPEESRVSAQVAAPLAFPPSPASSDSSTKRPG) are disordered. In terms of domain architecture, PH spans 65-168 (SRLLKIRSRT…WVRGLAKLRA (104 aa)). The segment at 69–97 (KIRSRTWHKERLYRLQEDGLSVWFQRRIP) is substrate binding. Serine 101 is subject to Phosphoserine. EF-hand domains are found at residues 178-213 (RLDHWIHSYLHRADSDQDSKMSFKEIKSLLRMVNVD), 214-249 (MNDMYAYRLFKECDHSNNERLEGAEIEAFLRRLLKR), and 246-281 (LLKRPELEEIFRRYSGEDRVLSASELLEFLEDQGED). Aspartate 191, aspartate 193, aspartate 195, lysine 197, glutamate 202, aspartate 227, serine 229, asparagine 231, arginine 233, and glutamate 238 together coordinate Ca(2+). In terms of domain architecture, PI-PLC X-box spans 333-478 (QDMGQPLAHY…LKGRILVKGK (146 aa)). Histidine 348 is an active-site residue. Ca(2+) contacts are provided by asparagine 349, glutamate 378, and aspartate 380. Histidine 393 is a catalytic residue. Residue glutamate 427 coordinates Ca(2+). Residues lysine 476 and lysine 478 each contribute to the substrate site. Basic and acidic residues predominate over residues 484–493 (RSEDGRILSD). Residues 484–517 (RSEDGRILSDREEEEEEEEEAEEALEAAEQRSRA) form a disordered region. Position 492 is a phosphoserine (serine 492). The span at 494 to 509 (REEEEEEEEEAEEALE) shows a compositional bias: acidic residues. The PI-PLC Y-box domain maps to 524-640 (LSALAVYCCA…GYVLKPAYLR (117 aa)). A substrate-binding site is contributed by serine 553. Residue serine 569 is modified to Phosphoserine. Arginine 580 contributes to the substrate binding site. The region spanning 636 to 765 (PAYLRQLNTT…QGYRHIHLLS (130 aa)) is the C2 domain. Residues isoleucine 679, aspartate 681, asparagine 705, aspartate 734, tyrosine 735, and aspartate 736 each contribute to the Ca(2+) site.

It depends on Ca(2+) as a cofactor. Expressed in cerebellum and cerebral cortex.

It localises to the membrane. The protein resides in the cytoplasm. Its subcellular location is the cleavage furrow. The enzyme catalyses a 1,2-diacyl-sn-glycero-3-phospho-(1D-myo-inositol-4,5-bisphosphate) + H2O = 1D-myo-inositol 1,4,5-trisphosphate + a 1,2-diacyl-sn-glycerol + H(+). Strongly activated by phosphatidic acid. Inhibited by phosphatidylethanolamine (PtdEtn), phosphatidylcholine (PtdCho), sphingomyelin and phosphatidylserine (PtdSer). Functionally, hydrolyzes the phosphatidylinositol 4,5-bisphosphate (PIP2) to generate 2 second messenger molecules diacylglycerol (DAG) and inositol 1,4,5-trisphosphate (IP3). DAG mediates the activation of protein kinase C (PKC), while IP3 releases Ca(2+) from intracellular stores. Essential for trophoblast and placental development. May participate in cytokinesis by hydrolyzing PIP2 at the cleavage furrow. Regulates neurite outgrowth through the inhibition of RhoA/Rho kinase signaling. The protein is 1-phosphatidylinositol 4,5-bisphosphate phosphodiesterase delta-3 of Mus musculus (Mouse).